Here is a 600-residue protein sequence, read N- to C-terminus: Pyranose dehydrogenase 2 (600 aa).

A signal peptide spans 1-25; sequence MLSRVAKLNSRLVSLALLGSQIAFG. N-linked (GlcNAc...) asparagine glycans are attached at residues N99 and N114. The residue at position 127 (H127) is a Tele-8alpha-FAD histidine. N-linked (GlcNAc...) asparagine glycans are attached at residues N199, N275, and N342. Residue H535 is the Proton acceptor of the active site. The active site involves H579.

This sequence belongs to the GMC oxidoreductase family. As to quaternary structure, monomer. It depends on FAD as a cofactor. Post-translationally, N-glycosylated.

Its subcellular location is the secreted. It carries out the reaction pyranose + acceptor = pyranos-2-ulose + reduced acceptor.. The catalysed reaction is pyranose + acceptor = pyranos-3-ulose + reduced acceptor.. The enzyme catalyses pyranose + acceptor = pyranos-2,3-diulose + reduced acceptor.. It catalyses the reaction a pyranoside + acceptor = a pyranosid-3-ulose + reduced acceptor.. It carries out the reaction a pyranoside + acceptor = a pyranosid-3,4-diulose + reduced acceptor.. Its function is as follows. Catalyzes the single-oxidation or sequential double oxidation reaction of carbohydrates primarily at carbon-2 and/or carbon-3 with the concomitant reduction of the flavin. The enzyme exhibits a broad sugar substrate specificity, oxidizing different aldopyranoses to the corresponding C-1, C-2, C-3 or C-1,2, C-2,3 and C-3,4 (di)dehydro sugars with substrate-specific regioselectivity. Accepts only a narrow range of electron acceptors such as substituted benzoquinones and complexed metal ions and reacts extremely slowly with O(2) as acceptor. May play a role in the natural recycling of plant matter by oxidizing all major monosaccharides in lignocellulose and by reducing quinone compounds or reactive radical species generated during lignin depolymerization. The chain is Pyranose dehydrogenase 2 from Leucoagaricus meleagris (Western flat-topped agaric).